We begin with the raw amino-acid sequence, 264 residues long: NAD kinase 1 (264 aa).

The active-site Proton acceptor is the Asp-45. NAD(+) contacts are provided by residues 45–46 (DG), Gly-46, 122–123 (NE), Arg-148, Asp-150, Ser-158, 161–166 (TAYNKS), and His-223.

The protein belongs to the NAD kinase family. Homotetramer. Requires a divalent metal cation as cofactor.

Its subcellular location is the cytoplasm. It catalyses the reaction NAD(+) + ATP = ADP + NADP(+) + H(+). Its activity is regulated as follows. Competitively inhibited by 5'-thioacetyladenosine (TAA) and di-(5'-thioadenosine) (DTA). Involved in the regulation of the intracellular balance of NAD and NADP, and is a key enzyme in the biosynthesis of NADP. Catalyzes specifically the phosphorylation on 2'-hydroxyl of the adenosine moiety of NAD to yield NADP. In Listeria monocytogenes serovar 1/2a (strain ATCC BAA-679 / EGD-e), this protein is NAD kinase 1.